The sequence spans 436 residues: 3-ketoacyl-CoA thiolase (436 aa).

Cys-99 (acyl-thioester intermediate) is an active-site residue. Active-site proton acceptor residues include His-392 and Cys-422.

This sequence belongs to the thiolase-like superfamily. Thiolase family. In terms of assembly, heterotetramer of two alpha chains (FadJ) and two beta chains (FadI).

The protein localises to the cytoplasm. It catalyses the reaction an acyl-CoA + acetyl-CoA = a 3-oxoacyl-CoA + CoA. The protein operates within lipid metabolism; fatty acid beta-oxidation. Its function is as follows. Catalyzes the final step of fatty acid oxidation in which acetyl-CoA is released and the CoA ester of a fatty acid two carbons shorter is formed. The sequence is that of 3-ketoacyl-CoA thiolase from Shigella dysenteriae serotype 1 (strain Sd197).